A 214-amino-acid chain; its full sequence is tRNA (guanine-N(7)-)-methyltransferase (214 aa).

Residues Asp35, Glu60, Asn87, and Asp113 each contribute to the S-adenosyl-L-methionine site. Residue Asp113 is part of the active site. Residues Lys117 and Asp149 each contribute to the substrate site.

This sequence belongs to the class I-like SAM-binding methyltransferase superfamily. TrmB family.

The enzyme catalyses guanosine(46) in tRNA + S-adenosyl-L-methionine = N(7)-methylguanosine(46) in tRNA + S-adenosyl-L-homocysteine. It participates in tRNA modification; N(7)-methylguanine-tRNA biosynthesis. Functionally, catalyzes the formation of N(7)-methylguanine at position 46 (m7G46) in tRNA. The chain is tRNA (guanine-N(7)-)-methyltransferase from Prochlorococcus marinus (strain NATL2A).